A 434-amino-acid polypeptide reads, in one-letter code: Protein POLLENLESS 3 (434 aa).

Residues 13–47 (VYYTPPPARTSDHVAAMPMTERRRPPYSCSSSSER) form a disordered region. A Nuclear localization signal 1 motif is present at residues 34-37 (RRRP). TPR repeat units lie at residues 95–131 (DSAL…ESQD), 133–164 (IDNL…LEQG), 191–224 (ARIL…ERDK), and 241–274 (PEAK…AVEM). The stretch at 142–166 (KKSGRIEEEAVLLEHKLQTLEQGMG) forms a coiled coil. The tract at residues 309 to 329 (TANKNYSDVSSSPASVRPNSA) is disordered. Over residues 310–326 (ANKNYSDVSSSPASVRP) the composition is skewed to polar residues. The Nuclear localization signal 2 signature appears at 377 to 380 (KRKK). A compositionally biased stretch (basic and acidic residues) spans 393–408 (VKDTADGPKSESKKSW). Residues 393–434 (VKDTADGPKSESKKSWADIAEEEEAEEEEEERLQGELKTAEM) are disordered. Residues 408-434 (WADIAEEEEAEEEEEERLQGELKTAEM) are a coiled coil. A compositionally biased stretch (acidic residues) spans 411 to 423 (IAEEEEAEEEEEE). Basic and acidic residues predominate over residues 424 to 434 (RLQGELKTAEM).

This sequence belongs to the MS5 protein family. Expressed at low levels mostly in floral organs during meiosis. Also barely detectable in leaves, stems and roots.

It localises to the nucleus. Essential for male fertility, especially for microspore and pollen grain production. Involved in the regulation of cell division after male meiosis I and II to facilitate exit from meiosis and transition to G1. The sequence is that of Protein POLLENLESS 3 from Arabidopsis thaliana (Mouse-ear cress).